The sequence spans 133 residues: Pheromone-regulated membrane protein 3 (133 aa).

At 1–104 (MTAMKEDNAA…SKVQRENKGS (104 aa)) the chain is on the nuclear side. The disordered stretch occupies residues 36-100 (ADGFVINKAK…DASESKVQRE (65 aa)). Residues 69 to 75 (GRVRKHK) carry the Bipartite nuclear localization signal motif. Positions 90–100 (KDASESKVQRE) are enriched in basic and acidic residues. A helical membrane pass occupies residues 105 to 127 (FYQGAIFGSFLGAAVTTVLSNLA). The Perinuclear space segment spans residues 128-133 (VKALQN).

As to quaternary structure, interacts with KAR5.

Its subcellular location is the nucleus outer membrane. The protein resides in the cytoplasm. The protein localises to the cytoskeleton. It localises to the microtubule organizing center. It is found in the spindle pole body. In terms of biological role, required for the fusion of nuclear envelopes during mating, ensuring proper karyogamy. Plays a role in the initiation of outer nuclear envelope fusion. This Saccharomyces cerevisiae (strain ATCC 204508 / S288c) (Baker's yeast) protein is Pheromone-regulated membrane protein 3 (PRM3).